The following is a 1936-amino-acid chain: Trinucleotide repeat-containing gene 6C protein (1936 aa).

Positions 1–31 (MEEKKKKKQEEKKKKEGAQKKAADQKTKVPE) are enriched in basic and acidic residues. Disordered regions lie at residues 1–160 (MEEK…PTYR), 181–256 (PSIT…NSNG), 366–412 (PQES…AMQT), 439–931 (NGSS…IRRK), 961–1063 (VIQS…VAFG), and 1115–1139 (ESTSSCSSWGNAPKKGLQKGMKTSG). Over residues 34–44 (KTCSSQPQPAG) the composition is skewed to polar residues. Over residues 45–57 (TSTSTSTSTISSS) the composition is skewed to low complexity. A compositionally biased stretch (polar residues) spans 58-71 (NNGKRASASGQQPA). Residues 76-88 (LPREVPPRFRQQE) are compositionally biased toward basic and acidic residues. 2 stretches are compositionally biased toward polar residues: residues 100–111 (PTGTLTSVSPTQ) and 183–217 (ITGTETESASECTTDTDSASNCGSENSSMATGSAQ). The tract at residues 211–1133 (MATGSAQGNF…GNAPKKGLQK (923 aa)) is sufficient for interaction with argonaute family proteins. The segment covering 218–235 (GNFTGHTKKTNGNNGTNG) has biased composition (low complexity). A compositionally biased stretch (polar residues) spans 366–393 (PQESTEPQTSTSQNVSFSAQPQNLNTDG). Composition is skewed to low complexity over residues 394–408 (PNNTNPMNSSPNPIN), 439–453 (NGSSVSQVSGGSAEG), and 469–480 (GNSNSGFSQGNG). The segment covering 481–498 (DTVNSALSAKQNGSSSAV) has biased composition (polar residues). The residue at position 523 (Arg523) is an Omega-N-methylarginine. Residues 572–585 (GWESPSVTSQNPTV) show a composition bias toward polar residues. A compositionally biased stretch (low complexity) spans 594-614 (SWAKAASSGTTASEGSSDGSG). The segment covering 625-636 (GTGEGRRRDKGI) has biased composition (basic and acidic residues). Polar residues predominate over residues 654-669 (LSNTGWGQTPVKQNTA). Positions 674-684 (ESPRSERKNDN) are enriched in basic and acidic residues. Ser675 is modified (phosphoserine). A compositionally biased stretch (polar residues) spans 694–718 (TQASNSGGKNDGSIMNSTNTSSVSG). Low complexity-rich tracts occupy residues 720-730 (VNAPPAAVPAN) and 750-772 (SISSTAVSTAAAAKSGHAWSGAA). Composition is skewed to polar residues over residues 834-866 (NRSGSGWNDTTRSGNSGWGNSTNTKANPGTNWG) and 873-888 (PQQNWASKPQDNNVSN). The residue at position 924 (Ser924) is a Phosphoserine. Positions 964–982 (SSTTTNTTTTTTTTTSNTT) are enriched in low complexity. Thr987 carries the post-translational modification Phosphothreonine. The segment covering 1021–1035 (ENSWGEPSSPSTLVD) has biased composition (polar residues). The UBA domain occupies 1140-1185 (KQDEAWIMSRLIKQLTDMGFPREPAEEALKSNNMNLDQAMSALLEK). Ser1218 bears the Phosphoserine mark. 4 disordered regions span residues 1291–1312 (AAQARTMQQPPQPPVQPLNSSQ), 1419–1658 (VKQP…PSSS), 1689–1732 (STWS…PSST), and 1848–1869 (TSSWQSSSASSQPRLSAAGSSH). Positions 1388-1419 (MRQQEQQVARTITNLQQQIQQHQRQLAQALLV) form a coiled coil. Over residues 1421-1430 (QPPPPPPPPH) the composition is skewed to pro residues. The interval 1467–1936 (NTFAPYPLAG…PGDLLSGESL (470 aa)) is silencing domain; interaction with CNOT1 and PAN3. Residues 1496 to 1515 (DPSQSQSRLPQWTHPNSMDN) are compositionally biased toward polar residues. A required for interaction with PABPC1 region spans residues 1578–1624 (KSDSDKISNGSSINWPPEFHPGVPWKGLQNIDPENDPDVTPGSVPTG). The segment at 1578–1936 (KSDSDKISNG…PGDLLSGESL (359 aa)) is sufficient for translational repression when tethered to a target mRNA. The PABPC1-interacting motif-2 (PAM2) stretch occupies residues 1588–1606 (SSINWPPEFHPGVPWKGLQ). A compositionally biased stretch (polar residues) spans 1623-1633 (TGPTINTTIQD). The span at 1641 to 1658 (SGGSSPPSSQNATLPSSS) shows a compositional bias: low complexity. Over residues 1689 to 1703 (STWSSGPTSHTQASL) the composition is skewed to polar residues. The RRM domain maps to 1811–1878 (AQKSLHMCVL…HGLVRSDAGH (68 aa)). The tract at residues 1842–1936 (GQALPPTSSW…PGDLLSGESL (95 aa)) is interaction with the CCR4-NOT complex. Over residues 1848–1865 (TSSWQSSSASSQPRLSAA) the composition is skewed to low complexity.

It belongs to the GW182 family. As to quaternary structure, interacts with one or more of the argonaute family proteins AGO1, AGO2, AGO3 and AGO4. Interacts with PABPC1 and EIF4G1. Interacts with CNOT1; the interaction is direct and mediates the association with the CCR4-NOT complex. Interacts with PAN3; the interaction mediates the association with the PAN complex.

In terms of biological role, plays a role in RNA-mediated gene silencing by micro-RNAs (miRNAs). Required for miRNA-dependent translational repression of complementary mRNAs by argonaute family proteins. As scaffoldng protein associates with argonaute proteins bound to partially complementary mRNAs and simultaneously can recruit CCR4-NOT and PAN deadenylase complexes. The polypeptide is Trinucleotide repeat-containing gene 6C protein (TNRC6C) (Homo sapiens (Human)).